A 346-amino-acid chain; its full sequence is Phosphoribosylformylglycinamidine cyclo-ligase (346 aa).

It belongs to the AIR synthase family.

Its subcellular location is the cytoplasm. It catalyses the reaction 2-formamido-N(1)-(5-O-phospho-beta-D-ribosyl)acetamidine + ATP = 5-amino-1-(5-phospho-beta-D-ribosyl)imidazole + ADP + phosphate + H(+). It participates in purine metabolism; IMP biosynthesis via de novo pathway; 5-amino-1-(5-phospho-D-ribosyl)imidazole from N(2)-formyl-N(1)-(5-phospho-D-ribosyl)glycinamide: step 2/2. This chain is Phosphoribosylformylglycinamidine cyclo-ligase, found in Vibrio parahaemolyticus serotype O3:K6 (strain RIMD 2210633).